Reading from the N-terminus, the 226-residue chain is Cytidylate kinase (226 aa).

Residue 12 to 20 coordinates ATP; that stretch reads GPSGAGKGT.

Belongs to the cytidylate kinase family. Type 1 subfamily.

The protein localises to the cytoplasm. It catalyses the reaction CMP + ATP = CDP + ADP. The enzyme catalyses dCMP + ATP = dCDP + ADP. The protein is Cytidylate kinase of Vibrio vulnificus (strain YJ016).